A 657-amino-acid chain; its full sequence is Endoplasmic reticulum chaperone BiP homolog (657 aa).

The first 17 residues, 1–17 (MKVFSLILIAFVANAYC), serve as a signal peptide directing secretion. ATP contacts are provided by residues 38–41 (GTTY), lysine 99, 229–231 (GGT), 295–302 (EKAKRALS), and 366–369 (GSTR). The tract at residues 128 to 282 (KPNVEVKVGS…KKKSGKDLRK (155 aa)) is nucleotide-binding (NBD). Residues 402–502 (VQAGVIGGVE…PRGVPQIEVT (101 aa)) form a substrate-binding (SBD) region. The interval 607-657 (LGSNQDASTEENKEQKKELESVVQPIVSKLYSAGGQGEQASEEPSEDHDEL) is disordered. Basic and acidic residues predominate over residues 616 to 626 (EENKEQKKELE). Positions 646–657 (ASEEPSEDHDEL) are enriched in acidic residues. The short motif at 654 to 657 (HDEL) is the Prevents secretion from ER element.

The protein belongs to the heat shock protein 70 family.

The protein resides in the endoplasmic reticulum lumen. It carries out the reaction ATP + H2O = ADP + phosphate + H(+). The chaperone activity is regulated by ATP-induced allosteric coupling of the nucleotide-binding (NBD) and substrate-binding (SBD) domains. In the ADP-bound and nucleotide-free (apo) states, the two domains have little interaction. In contrast, in the ATP-bound state the two domains are tightly coupled, which results in drastically accelerated kinetics in both binding and release of polypeptide substrates. J domain-containing co-chaperones stimulate the ATPase activity and are required for efficient substrate recognition. In terms of biological role, endoplasmic reticulum chaperone that plays a key role in protein folding and quality control in the endoplasmic reticulum lumen. Required for ER dynamics during the first embryonic cell divisions. Specifically, controls ER transition into sheet-like structures at the onset of mitosis, possibly by regulating homotypic membrane fusion. This Caenorhabditis elegans protein is Endoplasmic reticulum chaperone BiP homolog (hsp-4).